Here is a 209-residue protein sequence, read N- to C-terminus: dTTP/UTP pyrophosphatase (209 aa).

The Proton acceptor role is filled by Asp79.

Belongs to the Maf family. YhdE subfamily. A divalent metal cation serves as cofactor.

The protein localises to the cytoplasm. The catalysed reaction is dTTP + H2O = dTMP + diphosphate + H(+). It catalyses the reaction UTP + H2O = UMP + diphosphate + H(+). Nucleoside triphosphate pyrophosphatase that hydrolyzes dTTP and UTP. May have a dual role in cell division arrest and in preventing the incorporation of modified nucleotides into cellular nucleic acids. This Chelativorans sp. (strain BNC1) protein is dTTP/UTP pyrophosphatase.